The primary structure comprises 233 residues: CDP-diacylglycerol--glycerol-3-phosphate 3-phosphatidyltransferase 2 (233 aa).

The segment at 1-23 (MGEEDTATVDQNSFGGGKDSLLR) is disordered. 5 consecutive transmembrane segments (helical) span residues 40–60 (VITLPTVLTLGRVAAVPILVA), 71–91 (TATTSIFIAAAITDWLDGYIA), 100–120 (FGAFLDPVADKLMVAATLILL), 125–145 (MVAVVLGPVPWLVTVPSIAII), and 201–221 (LPSGIGLLYVSAGLSIWSLVV).

The protein belongs to the CDP-alcohol phosphatidyltransferase class-I family. It depends on Mn(2+) as a cofactor.

It is found in the microsome membrane. Its subcellular location is the endoplasmic reticulum membrane. The enzyme catalyses a CDP-1,2-diacyl-sn-glycerol + sn-glycerol 3-phosphate = a 1,2-diacyl-sn-glycero-3-phospho-(1'-sn-glycero-3'-phosphate) + CMP + H(+). Its pathway is phospholipid metabolism; phosphatidylglycerol biosynthesis; phosphatidylglycerol from CDP-diacylglycerol: step 1/2. Catalyzes the committed step to the synthesis of the acidic phospholipids, including phosphatidylglycerol (PG). Together with PGPS1, required for the proper embryo development by providing PG accurate levels. This Arabidopsis thaliana (Mouse-ear cress) protein is CDP-diacylglycerol--glycerol-3-phosphate 3-phosphatidyltransferase 2.